A 299-amino-acid polypeptide reads, in one-letter code: Homoserine O-acetyltransferase (299 aa).

Cys142 (acyl-thioester intermediate) is an active-site residue. Positions 163 and 192 each coordinate substrate. The active-site Proton acceptor is His235. The active site involves Glu237. Arg249 contacts substrate.

This sequence belongs to the MetA family.

The protein resides in the cytoplasm. The catalysed reaction is L-homoserine + acetyl-CoA = O-acetyl-L-homoserine + CoA. It participates in amino-acid biosynthesis; L-methionine biosynthesis via de novo pathway; O-acetyl-L-homoserine from L-homoserine: step 1/1. Functionally, transfers an acetyl group from acetyl-CoA to L-homoserine, forming acetyl-L-homoserine. This chain is Homoserine O-acetyltransferase, found in Synechococcus sp. (strain ATCC 27144 / PCC 6301 / SAUG 1402/1) (Anacystis nidulans).